We begin with the raw amino-acid sequence, 154 residues long: Transcription antitermination protein NusB (154 aa).

This sequence belongs to the NusB family.

In terms of biological role, involved in transcription antitermination. Required for transcription of ribosomal RNA (rRNA) genes. Binds specifically to the boxA antiterminator sequence of the ribosomal RNA (rrn) operons. The chain is Transcription antitermination protein NusB from Bordetella parapertussis (strain 12822 / ATCC BAA-587 / NCTC 13253).